Reading from the N-terminus, the 362-residue chain is Holliday junction branch migration complex subunit RuvB (362 aa).

Residues 1–27 form a disordered region; sequence MANIEKTEFHVPAPVSAAGNQKSSLGN. The large ATPase domain (RuvB-L) stretch occupies residues 13 to 206; the sequence is APVSAAGNQK…FGFTAQMEFY (194 aa). ATP contacts are provided by residues L45, R46, G87, K90, T91, T92, 153-155, R196, Y206, and R243; that span reads EDF. T91 is a binding site for Mg(2+). The interval 207 to 277 is small ATPAse domain (RuvB-S); the sequence is EVEDLTKVVV…AAQAALVVFD (71 aa). The interval 280–362 is head domain (RuvB-H); sequence EMGLDRLDRA…EPPEGIIGSL (83 aa). DNA is bound by residues R335 and R340.

The protein belongs to the RuvB family. As to quaternary structure, homohexamer. Forms an RuvA(8)-RuvB(12)-Holliday junction (HJ) complex. HJ DNA is sandwiched between 2 RuvA tetramers; dsDNA enters through RuvA and exits via RuvB. An RuvB hexamer assembles on each DNA strand where it exits the tetramer. Each RuvB hexamer is contacted by two RuvA subunits (via domain III) on 2 adjacent RuvB subunits; this complex drives branch migration. In the full resolvosome a probable DNA-RuvA(4)-RuvB(12)-RuvC(2) complex forms which resolves the HJ.

The protein localises to the cytoplasm. It catalyses the reaction ATP + H2O = ADP + phosphate + H(+). In terms of biological role, the RuvA-RuvB-RuvC complex processes Holliday junction (HJ) DNA during genetic recombination and DNA repair, while the RuvA-RuvB complex plays an important role in the rescue of blocked DNA replication forks via replication fork reversal (RFR). RuvA specifically binds to HJ cruciform DNA, conferring on it an open structure. The RuvB hexamer acts as an ATP-dependent pump, pulling dsDNA into and through the RuvAB complex. RuvB forms 2 homohexamers on either side of HJ DNA bound by 1 or 2 RuvA tetramers; 4 subunits per hexamer contact DNA at a time. Coordinated motions by a converter formed by DNA-disengaged RuvB subunits stimulates ATP hydrolysis and nucleotide exchange. Immobilization of the converter enables RuvB to convert the ATP-contained energy into a lever motion, pulling 2 nucleotides of DNA out of the RuvA tetramer per ATP hydrolyzed, thus driving DNA branch migration. The RuvB motors rotate together with the DNA substrate, which together with the progressing nucleotide cycle form the mechanistic basis for DNA recombination by continuous HJ branch migration. Branch migration allows RuvC to scan DNA until it finds its consensus sequence, where it cleaves and resolves cruciform DNA. In Corynebacterium diphtheriae (strain ATCC 700971 / NCTC 13129 / Biotype gravis), this protein is Holliday junction branch migration complex subunit RuvB.